The sequence spans 241 residues: MHATELNTGHGSQRAIRLAPSILSADFARLGEEVCAIEAGGADLVHFDVMDNHYVPNLTIGPLVCEAIRPLVSIPIDVHLMVEPVDALIPLFAKAGANIISFHPEASRHVDRTIGLIRDHGCKAGLVLNPATPLGWLDHTLDQLDLVLLMSVNPGFGGQAFIPGVLDKVRQARARIDRQVDAGGRPVWLEIDGGVKADNIAAIARAGADTFVAGSAVFGAPDADGGYSSILYRLREAATVT.

Serine 21 is a binding site for substrate. A divalent metal cation-binding residues include histidine 46, aspartate 48, and histidine 79. Aspartate 48 acts as the Proton acceptor in catalysis. Residues histidine 79, 155 to 158, 192 to 194, and 214 to 215 contribute to the substrate site; these read GFGG, DGG, and GS. Aspartate 192 is an a divalent metal cation binding site. Aspartate 192 (proton donor) is an active-site residue.

This sequence belongs to the ribulose-phosphate 3-epimerase family. Requires a divalent metal cation as cofactor.

It carries out the reaction D-ribulose 5-phosphate = D-xylulose 5-phosphate. The protein operates within carbohydrate degradation. In terms of biological role, catalyzes the reversible epimerization of D-ribulose 5-phosphate to D-xylulose 5-phosphate. The chain is Ribulose-phosphate 3-epimerase 1 from Cupriavidus necator (strain ATCC 17699 / DSM 428 / KCTC 22496 / NCIMB 10442 / H16 / Stanier 337) (Ralstonia eutropha).